The sequence spans 416 residues: Gamma-glutamyl phosphate reductase (416 aa).

It belongs to the gamma-glutamyl phosphate reductase family.

Its subcellular location is the cytoplasm. It carries out the reaction L-glutamate 5-semialdehyde + phosphate + NADP(+) = L-glutamyl 5-phosphate + NADPH + H(+). Its pathway is amino-acid biosynthesis; L-proline biosynthesis; L-glutamate 5-semialdehyde from L-glutamate: step 2/2. Catalyzes the NADPH-dependent reduction of L-glutamate 5-phosphate into L-glutamate 5-semialdehyde and phosphate. The product spontaneously undergoes cyclization to form 1-pyrroline-5-carboxylate. In Salmonella typhi, this protein is Gamma-glutamyl phosphate reductase.